The primary structure comprises 363 residues: Flagellar P-ring protein (363 aa).

The first 21 residues, 1–21, serve as a signal peptide directing secretion; the sequence is MKTVINIFILFTFLASLSANA.

It belongs to the FlgI family. The basal body constitutes a major portion of the flagellar organelle and consists of four rings (L,P,S, and M) mounted on a central rod.

The protein resides in the periplasm. It is found in the bacterial flagellum basal body. In terms of biological role, assembles around the rod to form the L-ring and probably protects the motor/basal body from shearing forces during rotation. The protein is Flagellar P-ring protein of Colwellia psychrerythraea (strain 34H / ATCC BAA-681) (Vibrio psychroerythus).